Here is a 119-residue protein sequence, read N- to C-terminus: Na(+)/H(+) antiporter subunit G (119 aa).

3 helical membrane passes run 7 to 29 (IISI…IIRF), 44 to 61 (TLGV…FFLV), and 66 to 88 (VGKL…MMMG).

It belongs to the CPA3 antiporters (TC 2.A.63) subunit G family. As to quaternary structure, forms a heterooligomeric complex that consists of seven subunits: MrpA, MrpB, MrpC, MrpD, MrpE, MrpF and MrpG.

It is found in the cell membrane. Functionally, mnh complex is a Na(+)Li(+)/H(+) antiporter involved in Na(+) and/or Li(+) excretion and Na(+) resistance. Na(+)/H(+) antiport consumes a transmembrane electrical potential, and is thus inferred to be electrogenic. Does not transport K(+), Ca(2+) or Mg(2+). The protein is Na(+)/H(+) antiporter subunit G (mrpG) of Alkalihalophilus pseudofirmus (strain ATCC BAA-2126 / JCM 17055 / OF4) (Bacillus pseudofirmus).